The sequence spans 366 residues: RISC-loading complex subunit TARBP2 (366 aa).

3 sufficient for interaction with PRKRA regions span residues 22–105, 152–234, and 287–366; these read MLAA…EPAL, SPQQ…DARD, and LGAL…AGSK. In terms of domain architecture, DRBM 1 spans 30 to 97; sequence TPISLLQEYG…AEVALKHLKG (68 aa). Residues 135–158 form a disordered region; that stretch reads PSAVPTRSSPMEVQPPVSPQQSEC. Position 152 is a phosphoserine (serine 152). 2 DRBM domains span residues 159–227 and 293–361; these read NPVG…RVHT and ACCS…YLKI. A sufficient for interaction with DICER1 region spans residues 228-366; that stretch reads VPLDARDGNE…QYLKIMAGSK (139 aa).

The protein belongs to the TARBP2 family. As to quaternary structure, self-associates. Component of the RISC loading complex (RLC), or micro-RNA (miRNA) loading complex (miRLC), which is composed of DICER1, AGO2 and TARBP2. Note that the trimeric RLC/miRLC is also referred to as RISC. Interacts with EIF2AK2/PKR and inhibits its protein kinase activity. Interacts with DHX9 and PRKRA. Interacts with DICER1, AGO2, MOV10, EIF6 and RPL7A (60S ribosome subunit); they form a large RNA-induced silencing complex (RISC). Interacts with IRF7; this interaction prevents IRF7 phosphorylation and activation.

Its subcellular location is the cytoplasm. It localises to the perinuclear region. The protein resides in the nucleus. Its function is as follows. Required for formation of the RNA induced silencing complex (RISC). Component of the RISC loading complex (RLC), also known as the micro-RNA (miRNA) loading complex (miRLC), which is composed of DICER1, AGO2 and TARBP2. Within the RLC/miRLC, DICER1 and TARBP2 are required to process precursor miRNAs (pre-miRNAs) to mature miRNAs and then load them onto AGO2. AGO2 bound to the mature miRNA constitutes the minimal RISC and may subsequently dissociate from DICER1 and TARBP2. May also play a role in the production of short interfering RNAs (siRNAs) from double-stranded RNA (dsRNA) by DICER1. Binds in vitro to the PRM1 3'-UTR. Seems to act as a repressor of translation. For some pre-miRNA substrates, may also alter the choice of cleavage site by DICER1. Negatively regulates IRF7-mediated IFN-beta signaling triggered by viral infection by inhibiting the phosphorylation of IRF7 and promoting its 'Lys'-48-linked ubiquitination and degradation. The polypeptide is RISC-loading complex subunit TARBP2 (Bos taurus (Bovine)).